Reading from the N-terminus, the 770-residue chain is Glutamate carboxypeptidase 2 homolog (770 aa).

The Cytoplasmic segment spans residues 1–25; that stretch reads MPYVGVGAQTVSTSLTGAPMVKAYI. The helical; Signal-anchor for type II membrane protein transmembrane segment at 26–42 threads the bilayer; sequence AIAASLIFVFCIAALGV. Topologically, residues 43–770 are extracellular; sequence HHSERKFNKF…CVVNTLRDVI (728 aa). Asn-175 and Asn-337 each carry an N-linked (GlcNAc...) asparagine glycan. The tract at residues 282–597 is catalytic; sequence SKKELFKGRT…QYWAELAKTF (316 aa). The Zn(2+) site is built by His-387 and Asp-397. N-linked (GlcNAc...) asparagine glycosylation is present at Asn-417. Catalysis depends on Glu-435, which acts as the Nucleophile. Zn(2+)-binding residues include Glu-436 and Asp-464. Asn-469, Asn-546, and Asn-551 each carry an N-linked (GlcNAc...) asparagine glycan. His-562 contacts Zn(2+). Asn-579, Asn-606, and Asn-630 each carry an N-linked (GlcNAc...) asparagine glycan.

This sequence belongs to the peptidase M28 family. M28B subfamily. Zn(2+) serves as cofactor.

Its subcellular location is the membrane. The catalysed reaction is Release of an unsubstituted, C-terminal glutamyl residue, typically from Ac-Asp-Glu or folylpoly-gamma-glutamates.. This chain is Glutamate carboxypeptidase 2 homolog, found in Caenorhabditis elegans.